Reading from the N-terminus, the 255-residue chain is 3-deoxy-manno-octulosonate cytidylyltransferase (255 aa).

Belongs to the KdsB family.

The protein resides in the cytoplasm. The catalysed reaction is 3-deoxy-alpha-D-manno-oct-2-ulosonate + CTP = CMP-3-deoxy-beta-D-manno-octulosonate + diphosphate. The protein operates within nucleotide-sugar biosynthesis; CMP-3-deoxy-D-manno-octulosonate biosynthesis; CMP-3-deoxy-D-manno-octulosonate from 3-deoxy-D-manno-octulosonate and CTP: step 1/1. It functions in the pathway bacterial outer membrane biogenesis; lipopolysaccharide biosynthesis. Functionally, activates KDO (a required 8-carbon sugar) for incorporation into bacterial lipopolysaccharide in Gram-negative bacteria. This chain is 3-deoxy-manno-octulosonate cytidylyltransferase, found in Hahella chejuensis (strain KCTC 2396).